The primary structure comprises 264 residues: Thymidylate synthase (264 aa).

Arg-21 contributes to the dUMP binding site. Residue His-51 coordinates (6R)-5,10-methylene-5,6,7,8-tetrahydrofolate. 126–127 (RR) is a binding site for dUMP. Cys-146 (nucleophile) is an active-site residue. DUMP contacts are provided by residues 166-169 (RSAD), Asn-177, and 207-209 (HIY). A (6R)-5,10-methylene-5,6,7,8-tetrahydrofolate-binding site is contributed by Asp-169. Ala-263 is a binding site for (6R)-5,10-methylene-5,6,7,8-tetrahydrofolate.

The protein belongs to the thymidylate synthase family. Bacterial-type ThyA subfamily. In terms of assembly, homodimer.

The protein localises to the cytoplasm. The enzyme catalyses dUMP + (6R)-5,10-methylene-5,6,7,8-tetrahydrofolate = 7,8-dihydrofolate + dTMP. The protein operates within pyrimidine metabolism; dTTP biosynthesis. Functionally, catalyzes the reductive methylation of 2'-deoxyuridine-5'-monophosphate (dUMP) to 2'-deoxythymidine-5'-monophosphate (dTMP) while utilizing 5,10-methylenetetrahydrofolate (mTHF) as the methyl donor and reductant in the reaction, yielding dihydrofolate (DHF) as a by-product. This enzymatic reaction provides an intracellular de novo source of dTMP, an essential precursor for DNA biosynthesis. This chain is Thymidylate synthase, found in Porphyromonas gingivalis (strain ATCC BAA-308 / W83).